A 301-amino-acid chain; its full sequence is NADH-cytochrome b5 reductase 3 (301 aa).

The N-myristoyl glycine moiety is linked to residue G2. One can recognise an FAD-binding FR-type domain in the interval 40-152 (DIKYPLRLID…RGPNGLLVYQ (113 aa)). K42 is modified (N6-acetyllysine). Y43 carries the post-translational modification Phosphotyrosine. An N6-acetyllysine modification is found at K50. 6 residues coordinate FAD: R92, P93, Y94, V109, K111, and F114. N6-acetyllysine is present on K120. Positions 126, 127, 128, and 185 each coordinate FAD.

This sequence belongs to the flavoprotein pyridine nucleotide cytochrome reductase family. In terms of assembly, component of a complex composed of cytochrome b5, NADH-cytochrome b5 reductase (CYB5R3) and MTARC2. Interacts with MTLN; the interaction is required to maintain cellular lipid composition and leads to stimulation of mitochondrial respiratory complex I activity. It depends on FAD as a cofactor.

The protein localises to the endoplasmic reticulum membrane. The protein resides in the mitochondrion outer membrane. The enzyme catalyses 2 Fe(III)-[cytochrome b5] + NADH = 2 Fe(II)-[cytochrome b5] + NAD(+) + H(+). In terms of biological role, catalyzes the reduction of two molecules of cytochrome b5 using NADH as the electron donor. The polypeptide is NADH-cytochrome b5 reductase 3 (Mus musculus (Mouse)).